The chain runs to 699 residues: Elongation factor G (699 aa).

Residues E8–V290 enclose the tr-type G domain. Residues A17–T24, D88–H92, and N142–D145 contribute to the GTP site.

Belongs to the TRAFAC class translation factor GTPase superfamily. Classic translation factor GTPase family. EF-G/EF-2 subfamily.

Its subcellular location is the cytoplasm. Its function is as follows. Catalyzes the GTP-dependent ribosomal translocation step during translation elongation. During this step, the ribosome changes from the pre-translocational (PRE) to the post-translocational (POST) state as the newly formed A-site-bound peptidyl-tRNA and P-site-bound deacylated tRNA move to the P and E sites, respectively. Catalyzes the coordinated movement of the two tRNA molecules, the mRNA and conformational changes in the ribosome. The polypeptide is Elongation factor G (Alkalilimnicola ehrlichii (strain ATCC BAA-1101 / DSM 17681 / MLHE-1)).